The following is a 262-amino-acid chain: Glycerol uptake facilitator protein (262 aa).

The Cytoplasmic segment spans residues 1 to 7 (MNFCSKK). A helical membrane pass occupies residues 8 to 36 (KILKQCFFEFLGTGLIIFLGISSLVVSKL). Over 37–41 (TNFHF) the chain is Extracellular. A helical transmembrane segment spans residues 42–62 (NHCEISCIWGLGVFISICFCS). The Cytoplasmic segment spans residues 63–65 (SVS). Residues 66–69 (GAHL) lie within the membrane without spanning it. The short motif at 70–72 (NPA) is the NPA 1 element. The segment at residues 70–80 (NPAITIFLFLS) is an intramembrane region (helical). The Cytoplasmic portion of the chain corresponds to 81 to 86 (SQFNKK). The helical transmembrane segment at 87–110 (KVIPYILSQISGTFFFTFLIYLIF) threads the bilayer. Residues 111-145 (NNLLNSFESKYNIVRGTKKSLELASLFCVFPKENY) lie on the Extracellular side of the membrane. The helical transmembrane segment at 146–171 (NFIHDFILEILIGIIFIIILMKLSEK) threads the bilayer. At 172 to 180 (NNLFKFYKF) the chain is on the cytoplasmic side. The helical transmembrane segment at 181–197 (INPFLIGTLVIIINLFL) threads the bilayer. Over 198–201 (TSYS) the chain is Extracellular. The stretch at 202-205 (NITL) is an intramembrane region. An NPA 2 motif is present at residues 206–208 (NPA). The segment at residues 206-219 (NPARDLGPRIFLSL) is an intramembrane region (helical). The Extracellular portion of the chain corresponds to 220-234 (IGWGKLAFTGDDNII). The chain crosses the membrane as a helical span at residues 235–259 (FPYFLIPTIAPIIGINLGGWIYILY). The Cytoplasmic portion of the chain corresponds to 260 to 262 (IKK).

This sequence belongs to the MIP/aquaporin (TC 1.A.8) family.

It is found in the cell membrane. The catalysed reaction is glycerol(in) = glycerol(out). Functionally, mediates glycerol diffusion across the cytoplasmic membrane via a pore-type mechanism. This is Glycerol uptake facilitator protein (glpF) from Buchnera aphidicola subsp. Schizaphis graminum (strain Sg).